A 358-amino-acid polypeptide reads, in one-letter code: Cytoplasmic dynein 2 light intermediate chain 1 (358 aa).

Disordered regions lie at residues 1 to 35 and 307 to 358; these read MPKV…EDAH and ESTR…ALDP. The segment covering 24-33 has biased composition (acidic residues); the sequence is TDEEEAEEED. Composition is skewed to basic and acidic residues over residues 307-320 and 333-349; these read ESTR…DPVK and RAQK…EQAK.

This sequence belongs to the dynein light intermediate chain family. In terms of assembly, light intermediate chain of the cytoplasmic dynein complex 2, a multisubunit complex composed at least of eleven different proteins. The cytoplasmic dynein 2 complex consists of two catalytic heavy chains (HCs) and a number of non-catalytic subunits presented by intermediate chains (ICs), light intermediate chains (LICs) and light chains (LCs). Among them, a heavy chain (DYNC2H1), two intermediate chains (DYNC2I2 and DYNC2I1), a light intermediate chain (DYNC2LI1), and a light chain (DYNLT2B) are unique to the dynein-2 complex, but a subset of light chains are also shared by dynein-1 and dynein-2 complexes. Dynein-2 complex is built around two copies of cytoplasmic dynein 2 heavy chain 1 (DYNC2H1). The C-terminal region forms the motor domain, which converts the energy from ATP hydrolysis into movement. Its N-terminal region forms the tail, an extended structure that binds the other subunits and holds the two heavy chains in a homodimer.

The protein localises to the cytoplasm. The protein resides in the cell projection. It is found in the cilium. Its subcellular location is the cytoskeleton. It localises to the cilium basal body. The protein localises to the cilium axoneme. The protein resides in the microtubule organizing center. It is found in the centrosome. Acts as one of several non-catalytic accessory components of the cytoplasmic dynein 2 complex (dynein-2 complex), a motor protein complex that drives the movement of cargos along microtubules within cilia and flagella in concert with the intraflagellar transport (IFT) system, facilitating the assembly of these organelles. The polypeptide is Cytoplasmic dynein 2 light intermediate chain 1 (dync2li1) (Danio rerio (Zebrafish)).